Consider the following 217-residue polypeptide: 3,4-dihydroxy-2-butanone 4-phosphate synthase (217 aa).

Residues 37–38, aspartate 42, 150–154, and glutamate 174 contribute to the D-ribulose 5-phosphate site; these read RE and RRGHT. Glutamate 38 is a Mg(2+) binding site. Histidine 153 is a binding site for Mg(2+).

Belongs to the DHBP synthase family. Homodimer. Mg(2+) serves as cofactor. Mn(2+) is required as a cofactor.

It catalyses the reaction D-ribulose 5-phosphate = (2S)-2-hydroxy-3-oxobutyl phosphate + formate + H(+). Its pathway is cofactor biosynthesis; riboflavin biosynthesis; 2-hydroxy-3-oxobutyl phosphate from D-ribulose 5-phosphate: step 1/1. In terms of biological role, catalyzes the conversion of D-ribulose 5-phosphate to formate and 3,4-dihydroxy-2-butanone 4-phosphate. The sequence is that of 3,4-dihydroxy-2-butanone 4-phosphate synthase from Syntrophotalea carbinolica (strain DSM 2380 / NBRC 103641 / GraBd1) (Pelobacter carbinolicus).